Consider the following 466-residue polypeptide: MKRFKLNYFIIGLIAILLTWSLWTTVPWRNAHQDNLAAIKARGELRISTLDAPLSYYSVNNQPSGFDYDLAQRFADYLGVTLKVRVRSNLNQLFDDLENDNADILAASLIYNAERLNRFTVGPSYYSVSQQLVYRLGQPRPKNLGDLRGRLAVASGSAQITQLRQLKKKQYPQLAWEVSSDLSSRSLLEKVADGKLDYTLADSASVGLLQRVHPQLAVAFDITEEKPVTWYLRRSDSEGLSAALLDFFSQLNDNGIMARLEEKYLGHVGGFDYVDTKTFLNAIDATLPALQPLFERYAHDIDWKLLAAISYQESHWDPLATSATGVRGLMMLTRPTADSLGIGDRTNAEQSVRGGALYLSRMMQRLPDTIPEDEKIWFALAAYNMGYAHMLDARALTAKQQGNADSWVDVKLRLPMLSQPRYYKQTLYGYARGQQAYNYVENIRRYEISLVGYLQEKEKKAAQLAD.

A signal peptide spans 1-24 (MKRFKLNYFIIGLIAILLTWSLWT). The non-LT domain stretch occupies residues 25–268 (TVPWRNAHQD…RLEEKYLGHV (244 aa)). The interval 269 to 466 (GGFDYVDTKT…KEKKAAQLAD (198 aa)) is LT domain. Glu-313 is a catalytic residue.

In the N-terminal section; belongs to the bacterial solute-binding protein 3 family. It in the C-terminal section; belongs to the transglycosylase Slt family.

The protein resides in the cell outer membrane. It carries out the reaction Exolytic cleavage of the (1-&gt;4)-beta-glycosidic linkage between N-acetylmuramic acid (MurNAc) and N-acetylglucosamine (GlcNAc) residues in peptidoglycan, from either the reducing or the non-reducing ends of the peptidoglycan chains, with concomitant formation of a 1,6-anhydrobond in the MurNAc residue.. Its function is as follows. Murein-degrading enzyme that degrades murein glycan strands and insoluble, high-molecular weight murein sacculi, with the concomitant formation of a 1,6-anhydromuramoyl product. Lytic transglycosylases (LTs) play an integral role in the metabolism of the peptidoglycan (PG) sacculus. Their lytic action creates space within the PG sacculus to allow for its expansion as well as for the insertion of various structures such as secretion systems and flagella. The protein is Membrane-bound lytic murein transglycosylase F of Sodalis glossinidius (strain morsitans).